Consider the following 249-residue polypeptide: Flagellar L-ring protein (249 aa).

An N-terminal signal peptide occupies residues 1-25 (MSRLRTSHALRTAAALVAVGCLASG). Cys26 carries N-palmitoyl cysteine lipidation. A lipid anchor (S-diacylglycerol cysteine) is attached at Cys26.

It belongs to the FlgH family. The basal body constitutes a major portion of the flagellar organelle and consists of four rings (L,P,S, and M) mounted on a central rod.

It localises to the cell outer membrane. Its subcellular location is the bacterial flagellum basal body. In terms of biological role, assembles around the rod to form the L-ring and probably protects the motor/basal body from shearing forces during rotation. The protein is Flagellar L-ring protein of Afipia carboxidovorans (strain ATCC 49405 / DSM 1227 / KCTC 32145 / OM5) (Oligotropha carboxidovorans).